The sequence spans 441 residues: uncharacterized protein (441 aa).

12 helical membrane passes run 21–41, 51–71, 94–114, 118–138, 150–170, 195–215, 239–259, 260–280, 291–311, 334–354, 363–383, and 419–439; these read VVVALTFSAIVGGLVAGMSLG, LGGGATIALSYAMLGTFAVAI, AASTTGLKYAVLVALVLVTMS, VIPVHIAFIPILIPPLLGVFA, VLTFGLITPYMVLPVGFGGIF, AMLLPGAGMIFGLLLAIFVSY, QHILVAALGIIAALGVQLYTG, SMIIGALAGFMVFTFGGVIAW, VHMMAMIGFIMIAAAGFAAVM, LAALLMLVVGLLVTMGIGSSF, IYVPLSLAFGFSPMATIALVG, and VVPTFIHYNIPLIIFGWIAAM.

It localises to the cell membrane. This is an uncharacterized protein from Vibrio parahaemolyticus serotype O3:K6 (strain RIMD 2210633).